The chain runs to 447 residues: Adenylosuccinate synthetase (447 aa).

GTP is bound by residues 12–18 (GDEGKGK) and 40–42 (GHT). The active-site Proton acceptor is D13. 2 residues coordinate Mg(2+): D13 and G40. Residues 13–16 (DEGK), 38–41 (NAGH), T128, R142, Q223, T238, and R302 each bind IMP. H41 functions as the Proton donor in the catalytic mechanism. 298 to 304 (TTTGRRR) serves as a coordination point for substrate. GTP is bound by residues R304, 330–332 (KLD), and 412–414 (SLG).

Belongs to the adenylosuccinate synthetase family. In terms of assembly, homodimer. Mg(2+) serves as cofactor.

It localises to the cytoplasm. The catalysed reaction is IMP + L-aspartate + GTP = N(6)-(1,2-dicarboxyethyl)-AMP + GDP + phosphate + 2 H(+). The protein operates within purine metabolism; AMP biosynthesis via de novo pathway; AMP from IMP: step 1/2. In terms of biological role, plays an important role in the de novo pathway of purine nucleotide biosynthesis. Catalyzes the first committed step in the biosynthesis of AMP from IMP. The sequence is that of Adenylosuccinate synthetase from Microcystis aeruginosa (strain NIES-843 / IAM M-2473).